A 412-amino-acid chain; its full sequence is MILHTLRLRSFRAHAESEFDLAPSINLLYGANGAGKTNVLEAVHYLCLTKSFTASRDRYAVRKDAPYFEIEGRIGQVREEPMTVRLAYVPGEGKSIFVNGAELDRLADIVGTLPVVVFSPEDYDLTAGGPSERRRFVNNILSQARSVYMETLMKYRRARRQRNEVLRSYKKRSAPPPDELLAPWTEKLVGLGSRIVHRRQQFLQAFADDLEEAYRRIDAVAERPTIEYDTIADLAPDATPDAIEDEFRAALARKQGQERDRGTTLVGPQRDELVFRLDDLEVRRYGSQGQHRTFAMALKLAQYFYLQQRNDTEPLLLLDDAFGKLDAERTGVFLDLLRSDAVGQSLVTATRRGPFEPALNAEPASHRALQVRPGGGTAAVTPDPEYARGEATAANGAASAPTGADAASTSRD.

ATP is bound at residue 30-37; that stretch reads GANGAGKT. Residues 369–412 are disordered; it reads LQVRPGGGTAAVTPDPEYARGEATAANGAASAPTGADAASTSRD. Residues 389 to 412 show a composition bias toward low complexity; the sequence is GEATAANGAASAPTGADAASTSRD.

It belongs to the RecF family.

The protein localises to the cytoplasm. In terms of biological role, the RecF protein is involved in DNA metabolism; it is required for DNA replication and normal SOS inducibility. RecF binds preferentially to single-stranded, linear DNA. It also seems to bind ATP. This Salinibacter ruber (strain DSM 13855 / M31) protein is DNA replication and repair protein RecF.